The following is a 278-amino-acid chain: Sulfur carrier protein FdhD (278 aa).

The active-site Cysteine persulfide intermediate is the C120.

This sequence belongs to the FdhD family.

The protein localises to the cytoplasm. Its function is as follows. Required for formate dehydrogenase (FDH) activity. Acts as a sulfur carrier protein that transfers sulfur from IscS to the molybdenum cofactor prior to its insertion into FDH. The protein is Sulfur carrier protein FdhD of Bordetella petrii (strain ATCC BAA-461 / DSM 12804 / CCUG 43448).